A 101-amino-acid polypeptide reads, in one-letter code: NADH-quinone oxidoreductase subunit K (101 aa).

3 helical membrane passes run 4 to 24 (LAHF…GIFL), 30 to 50 (IVLL…FVAF), and 61 to 81 (VFVF…LAIL).

The protein belongs to the complex I subunit 4L family. In terms of assembly, NDH-1 is composed of 14 different subunits. Subunits NuoA, H, J, K, L, M, N constitute the membrane sector of the complex.

It localises to the cell inner membrane. It catalyses the reaction a quinone + NADH + 5 H(+)(in) = a quinol + NAD(+) + 4 H(+)(out). In terms of biological role, NDH-1 shuttles electrons from NADH, via FMN and iron-sulfur (Fe-S) centers, to quinones in the respiratory chain. The immediate electron acceptor for the enzyme in this species is believed to be ubiquinone. Couples the redox reaction to proton translocation (for every two electrons transferred, four hydrogen ions are translocated across the cytoplasmic membrane), and thus conserves the redox energy in a proton gradient. This Cupriavidus taiwanensis (strain DSM 17343 / BCRC 17206 / CCUG 44338 / CIP 107171 / LMG 19424 / R1) (Ralstonia taiwanensis (strain LMG 19424)) protein is NADH-quinone oxidoreductase subunit K.